The following is an 854-amino-acid chain: Aryl hydrocarbon receptor (854 aa).

Residues 1–9 constitute a propeptide that is removed on maturation; the sequence is MSSGANITY. Positions 1–38 are disordered; it reads MSSGANITYASRKRRKPVQKTVKPIPAEGIKSNPSKRH. 2 consecutive short sequence motifs (nuclear localization signal) follow at residues 12–15 and 36–41; these read RKRR and KRHRDR. Positions 26–79 constitute a bHLH domain; it reads PAEGIKSNPSKRHRDRLNTELDRLASLLPFPQDVINKLDKLSVLRLSVSYLRAK. The segment at 37-65 is DNA-binding; sequence RHRDRLNTELDRLASLLPFPQDVINKLDK. 3 required for maintaining the overall integrity of the AHR:ARNT heterodimer and its transcriptional activity regions span residues 49–81, 116–124, and 264–266; these read LASL…AKSF, LLQALNGFV, and FAI. Positions 63–71 match the Nuclear export signal motif; sequence LDKLSVLRL. A PAS 1 domain is found at 111–175; that stretch reads QEGEFLLQAL…AEFQRQLHWA (65 aa). The PAS 2 domain occupies 270–340; the sequence is LQPPSILEIR…CAESHIRMIK (71 aa). One can recognise a PAC domain in the interval 346-387; the sequence is MTVFRLLAKHSRWRWVQSNARLIYRNGRPDYIIATQRPLTDE. The interval 425–452 is disordered; the sequence is LPIRTKSNTSRKDWAPQSTPSKDSFHPS. Polar residues predominate over residues 440–452; it reads PQSTPSKDSFHPS.

As to quaternary structure, homodimer. Heterodimer; efficient DNA binding requires dimerization with another bHLH protein. Interacts with ARNT; the heterodimer ARNT:AHR binds to core DNA sequence 5'-TGCGTG-3' within the dioxin response element (DRE) of target gene promoters and activates their transcription. Binds MYBBP1A. Interacts with coactivators including SRC-1, RIP140 and NOCA7, and with the corepressor SMRT. Interacts with NEDD8 and IVNS1ABP. Interacts with BMAL1. Interacts with HSP90AB1. Interacts with TIPARP; leading to mono-ADP-ribosylation of AHR and subsequent inhibition of AHR. Post-translationally, mono-ADP-ribosylated, leading to inhibit transcription activator activity of AHR.

It localises to the cytoplasm. Its subcellular location is the nucleus. Its function is as follows. Ligand-activated transcription factor that enables cells to adapt to changing conditions by sensing compounds from the environment, diet, microbiome and cellular metabolism, and which plays important roles in development, immunity and cancer. Upon ligand binding, translocates into the nucleus, where it heterodimerizes with ARNT and induces transcription by binding to xenobiotic response elements (XRE). Regulates a variety of biological processes, including angiogenesis, hematopoiesis, drug and lipid metabolism, cell motility and immune modulation. Xenobiotics can act as ligands: upon xenobiotic-binding, activates the expression of multiple phase I and II xenobiotic chemical metabolizing enzyme genes (such as the CYP1A1 gene). Mediates biochemical and toxic effects of halogenated aromatic hydrocarbons. Next to xenobiotics, natural ligands derived from plants, microbiota, and endogenous metabolism are potent AHR agonists. Tryptophan (Trp) derivatives constitute an important class of endogenous AHR ligands. Acts as a negative regulator of anti-tumor immunity: indoles and kynurenic acid generated by Trp catabolism act as ligand and activate AHR, thereby promoting AHR-driven cancer cell motility and suppressing adaptive immunity. Regulates the circadian clock by inhibiting the basal and circadian expression of the core circadian component PER1. Inhibits PER1 by repressing the CLOCK-BMAL1 heterodimer mediated transcriptional activation of PER1. The heterodimer ARNT:AHR binds to core DNA sequence 5'-TGCGTG-3' within the dioxin response element (DRE) of target gene promoters and activates their transcription. The protein is Aryl hydrocarbon receptor (Ahr) of Mus spretus (Western Mediterranean mouse).